A 696-amino-acid polypeptide reads, in one-letter code: DEAD-box ATP-dependent RNA helicase 7 (696 aa).

Residues 1-116 are disordered; that stretch reads MPSLPVAAAE…GDEDPADPNA (116 aa). A coiled-coil region spans residues 16-97; that stretch reads ESASKKSKRK…KVVVEEEEED (82 aa). The segment covering 27–38 has biased composition (basic and acidic residues); that stretch reads KAAEVEVEASSR. Basic residues predominate over residues 39–49; it reads KKEKKEKKRKA. Low complexity predominate over residues 67–77; sequence STSSDEPAPAA. The span at 92-112 shows a compositional bias: acidic residues; sequence EEEEEDDDEGELTASGDEDPA. Residues 115 to 143 carry the Q motif motif; sequence NALANFRISESLREKLKSKGIKALFPIQA. One can recognise a Helicase ATP-binding domain in the interval 146–328; the sequence is FDLVLDGHDL…LRFLKSGKKT (183 aa). Residue 159 to 166 coordinates ATP; that stretch reads ARTGQGKT. Residues 274 to 277 carry the DEAD box motif; that stretch reads DEAD. The region spanning 357-500 is the Helicase C-terminal domain; the sequence is QVIPDIIRCY…ISAPQPTDVA (144 aa). Residues 641 to 696 are disordered; the sequence is LPPLQEREQSGGSRGGGRFGNRRFSGGGGGRGGGGRGFGGGRGRGGGGGNRFNKRY. A compositionally biased stretch (gly residues) spans 652–690; that stretch reads GSRGGGRFGNRRFSGGGGGRGGGGRGFGGGRGRGGGGGN.

This sequence belongs to the DEAD box helicase family. DDX21/DDX50 subfamily.

Its subcellular location is the nucleus. It carries out the reaction ATP + H2O = ADP + phosphate + H(+). The polypeptide is DEAD-box ATP-dependent RNA helicase 7 (Oryza sativa subsp. japonica (Rice)).